Reading from the N-terminus, the 83-residue chain is Large ribosomal subunit protein eL43 (83 aa).

Cysteine 38, cysteine 41, cysteine 56, and cysteine 59 together coordinate Zn(2+). A C4-type zinc finger spans residues 38–59 (CPVCGRRAVKRISTGIWQCTKC).

The protein belongs to the eukaryotic ribosomal protein eL43 family. Putative zinc-binding subfamily. In terms of assembly, part of the 50S ribosomal subunit. The cofactor is Zn(2+).

Functionally, binds to the 23S rRNA. The polypeptide is Large ribosomal subunit protein eL43 (Pyrococcus horikoshii (strain ATCC 700860 / DSM 12428 / JCM 9974 / NBRC 100139 / OT-3)).